Consider the following 72-residue polypeptide: Translation initiation factor IF-1 (72 aa).

An S1-like domain is found at 1 to 72; sequence MAKDGVIEVE…NRGRITYRYK (72 aa).

This sequence belongs to the IF-1 family. In terms of assembly, component of the 30S ribosomal translation pre-initiation complex which assembles on the 30S ribosome in the order IF-2 and IF-3, IF-1 and N-formylmethionyl-tRNA(fMet); mRNA recruitment can occur at any time during PIC assembly.

It localises to the cytoplasm. Functionally, one of the essential components for the initiation of protein synthesis. Stabilizes the binding of IF-2 and IF-3 on the 30S subunit to which N-formylmethionyl-tRNA(fMet) subsequently binds. Helps modulate mRNA selection, yielding the 30S pre-initiation complex (PIC). Upon addition of the 50S ribosomal subunit IF-1, IF-2 and IF-3 are released leaving the mature 70S translation initiation complex. The protein is Translation initiation factor IF-1 of Bifidobacterium adolescentis (strain ATCC 15703 / DSM 20083 / NCTC 11814 / E194a).